Here is a 180-residue protein sequence, read N- to C-terminus: Acireductone dioxygenase (180 aa).

The Fe(2+) site is built by His99, His101, Glu105, and His145. His99, His101, Glu105, and His145 together coordinate Ni(2+).

The protein belongs to the acireductone dioxygenase (ARD) family. As to quaternary structure, monomer. Fe(2+) is required as a cofactor. The cofactor is Ni(2+).

The enzyme catalyses 1,2-dihydroxy-5-(methylsulfanyl)pent-1-en-3-one + O2 = 3-(methylsulfanyl)propanoate + CO + formate + 2 H(+). It catalyses the reaction 1,2-dihydroxy-5-(methylsulfanyl)pent-1-en-3-one + O2 = 4-methylsulfanyl-2-oxobutanoate + formate + 2 H(+). It functions in the pathway amino-acid biosynthesis; L-methionine biosynthesis via salvage pathway; L-methionine from S-methyl-5-thio-alpha-D-ribose 1-phosphate: step 5/6. Catalyzes 2 different reactions between oxygen and the acireductone 1,2-dihydroxy-3-keto-5-methylthiopentene (DHK-MTPene) depending upon the metal bound in the active site. Fe-containing acireductone dioxygenase (Fe-ARD) produces formate and 2-keto-4-methylthiobutyrate (KMTB), the alpha-ketoacid precursor of methionine in the methionine recycle pathway. Ni-containing acireductone dioxygenase (Ni-ARD) produces methylthiopropionate, carbon monoxide and formate, and does not lie on the methionine recycle pathway. This Geobacillus thermodenitrificans (strain NG80-2) protein is Acireductone dioxygenase.